Here is a 692-residue protein sequence, read N- to C-terminus: Elongation factor G (692 aa).

In terms of domain architecture, tr-type G spans 8–283; that stretch reads NRIRNIGIAA…AVIDYLPAPT (276 aa). GTP is bound by residues 17 to 24, 81 to 85, and 135 to 138; these read AHIDAGKT, DTPGH, and NKMD.

It belongs to the TRAFAC class translation factor GTPase superfamily. Classic translation factor GTPase family. EF-G/EF-2 subfamily.

Its subcellular location is the cytoplasm. Its function is as follows. Catalyzes the GTP-dependent ribosomal translocation step during translation elongation. During this step, the ribosome changes from the pre-translocational (PRE) to the post-translocational (POST) state as the newly formed A-site-bound peptidyl-tRNA and P-site-bound deacylated tRNA move to the P and E sites, respectively. Catalyzes the coordinated movement of the two tRNA molecules, the mRNA and conformational changes in the ribosome. The polypeptide is Elongation factor G (Helicobacter acinonychis (strain Sheeba)).